The primary structure comprises 394 residues: Probable dual specificity protein phosphatase DDB_G0281963 (394 aa).

The 141-residue stretch at 2–142 folds into the Tyrosine-protein phosphatase domain; the sequence is NDVSRIFPGF…LKKYELILKK (141 aa). C86 acts as the Phosphocysteine intermediate in catalysis. The segment at 147 to 191 is disordered; it reads PQIVEKESEEEDDDEDDDDDDYDSDEDDDDDSEDDDFEEEFDNVV. Residues 153 to 188 are compositionally biased toward acidic residues; the sequence is ESEEEDDDEDDDDDDYDSDEDDDDDSEDDDFEEEFD.

It belongs to the protein-tyrosine phosphatase family. Non-receptor class dual specificity subfamily.

It catalyses the reaction O-phospho-L-tyrosyl-[protein] + H2O = L-tyrosyl-[protein] + phosphate. The enzyme catalyses O-phospho-L-seryl-[protein] + H2O = L-seryl-[protein] + phosphate. It carries out the reaction O-phospho-L-threonyl-[protein] + H2O = L-threonyl-[protein] + phosphate. In terms of biological role, has a dual specificity toward Ser/Thr and Tyr-containing proteins. The sequence is that of Probable dual specificity protein phosphatase DDB_G0281963 from Dictyostelium discoideum (Social amoeba).